Consider the following 751-residue polypeptide: MPALGWAVAAILMLQTAMAEPSPGTLPRKAGVFSDLSNQELKAVHSFLWSKKELRLQPSSTTTMAKNTVFLIEMLLPKKYHVLRFLDKGERHPVREARAVIFFGDQEHPNVTEFAVGPLPGPCYMRALSPRPGYQSSWASRPISTAEYALLYHTLQEATKPLHQFFLNTTGFSFQDCHDRCLAFTDVAPRGVASGQRRSWLIIQRYVEGYFLHPTGLELLVDHGSTDAGHWAVEQVWYNGKFYGSPEELARKYADGEVDVVVLEDPLPGGKGHDSTEEPPLFSSHKPRGDFPSPIHVSGPRLVQPHGPRFRLEGNAVLYGGWSFAFRLRSSSGLQVLNVHFGGERIAYEVSVQEAVALYGGHTPAGMQTKYLDVGWGLGSVTHELAPGIDCPETATFLDTFHYYDADDPVHYPRALCLFEMPTGVPLRRHFNSNFKGGFNFYAGLKGQVLVLRTTSTVYNYDYIWDFIFYPNGVMEAKMHATGYVHATFYTPEGLRHGTRLHTHLIGNIHTHLVHYRVDLDVAGTKNSFQTLQMKLENITNPWSPRHRVVQPTLEQTQYSWERQAAFRFKRKLPKYLLFTSPQENPWGHKRTYRLQIHSMADQVLPPGWQEEQAITWARYPLAVTKYRESELCSSSIYHQNDPWHPPVVFEQFLHNNENIENEDLVAWVTVGFLHIPHSEDIPNTATPGNSVGFLLRPFNFFPEDPSLASRDTVIVWPRDNGPNYVQRWIPEDRDCSMPPPFSYNGTYRPV.

The N-terminal stretch at 1–19 (MPALGWAVAAILMLQTAMA) is a signal peptide. N110 and N168 each carry an N-linked (GlcNAc...) asparagine glycan. C177 and C181 are oxidised to a cystine. The active-site Proton acceptor is the D373. A disulfide bridge connects residues C391 and C417. The Schiff-base intermediate with substrate; via topaquinone role is filled by Y461. Y461 bears the 2',4',5'-topaquinone mark. H510 and H512 together coordinate Cu(2+). Residues D519, L520, and D521 each coordinate Ca(2+). A glycan (N-linked (GlcNAc...) asparagine) is linked at N538. Ca(2+)-binding residues include E562, F653, N656, E658, D664, and L665. H675 provides a ligand contact to Cu(2+). N-linked (GlcNAc...) asparagine glycosylation occurs at N745.

The protein belongs to the copper/topaquinone oxidase family. As to quaternary structure, homodimer; disulfide-linked. Cu(2+) serves as cofactor. Ca(2+) is required as a cofactor. It depends on L-topaquinone as a cofactor. Post-translationally, N-glycosylated. In terms of processing, topaquinone (TPQ) is generated by copper-dependent autoxidation of a specific tyrosyl residue. Widely expressed with higher expression in placenta and kidney.

Its subcellular location is the secreted. It localises to the extracellular space. The protein resides in the cell membrane. The catalysed reaction is histamine + O2 + H2O = imidazole-4-acetaldehyde + H2O2 + NH4(+). The enzyme catalyses N(tau)-methylhistamine + O2 + H2O = 1-methylimidazole-4-acetaldehyde + H2O2 + NH4(+). It carries out the reaction putrescine + O2 + H2O = 4-aminobutanal + H2O2 + NH4(+). It catalyses the reaction cadaverine + O2 + H2O = 5-aminopentanal + H2O2 + NH4(+). With respect to regulation, inhibited by amiloride and amiloride analogs. Inhibited by isoniazid, cimetidine, clonidine, berenil and pentamidine. Functionally, catalyzes the oxidative deamination of primary amines to the corresponding aldehydes with the concomitant production of hydrogen peroxide and ammonia. Its preferred substrates are the diamines histamine and 1-methylhistamine and it could therefore play a role in allergic and immune responses. Has a broad specificity for diamines and can also act on cadaverine and putrescine, two products of amino acid catabolism. It could also act on polyamines, like spermidine and spermine though less efficiently, and regulate various biological processes. The polypeptide is Diamine oxidase [copper-containing] (Homo sapiens (Human)).